A 386-amino-acid chain; its full sequence is Centrosomal protein of 44 kDa (386 aa).

The tract at residues 11-194 is binds with microtubules and centrioles; that stretch reads RKLEQVLRSL…GVPEGTVTST (184 aa). Residues 232–262 adopt a coiled-coil conformation; it reads ELTALQIALAECQEKLKKLTWIEKRLECLEA. At Ser-329 the chain carries Phosphoserine. Positions 359 to 382 form a coiled coil; sequence SEETTMQKMERMKKMFEETAELLK.

In terms of assembly, interacts with CROCC. Interacts with POC1B; the interaction is direct and recruits POC1B to centriolar microtubules. Binds to centriolar microtubules.

Its subcellular location is the cytoplasm. It localises to the cytoskeleton. It is found in the microtubule organizing center. The protein resides in the centrosome. The protein localises to the centriole. Its subcellular location is the spindle pole. It localises to the midbody. Functionally, centriole-enriched microtubule-binding protein involved in centriole biogenesis. In collaboration with CEP295 and POC1B, is required for the centriole-to-centrosome conversion by ensuring the formation of bona fide centriole wall. Functions as a linker component that maintains centrosome cohesion. Associates with CROCC and regulates its stability and localization to the centrosome. This is Centrosomal protein of 44 kDa (Cep44) from Rattus norvegicus (Rat).